Consider the following 118-residue polypeptide: U16-barytoxin-Tl1c (118 aa).

The signal sequence occupies residues 1 to 16 (MKTIIVFLSFLVLVLA). Residues 17–76 (TKFGDANEGVNREQTKEVIQNEFRGDFLNEMAAMSLLQQLEAIESALLEKEADRNSRQKR) constitute a propeptide that is removed on maturation. Disulfide bonds link Cys-77-Cys-92, Cys-84-Cys-97, and Cys-91-Cys-112.

Belongs to the neurotoxin 14 (magi-1) family. 06 (ICK-Trit) subfamily. As to expression, expressed by the venom gland.

Its subcellular location is the secreted. Ion channel inhibitor. The protein is U16-barytoxin-Tl1c of Trittame loki (Brush-footed trapdoor spider).